A 152-amino-acid chain; its full sequence is Xanthine-guanine phosphoribosyltransferase (152 aa).

Residues 37-38 (RG), Arg-69, and 88-96 (DDLVDTGGT) each bind 5-phospho-alpha-D-ribose 1-diphosphate. Residue Arg-69 coordinates GMP. Asp-89 is a Mg(2+) binding site. Guanine-binding residues include Asp-92 and Ile-135. Asp-92 and Ile-135 together coordinate xanthine. GMP contacts are provided by residues 92-96 (DTGGT) and 134-135 (WI).

Belongs to the purine/pyrimidine phosphoribosyltransferase family. XGPT subfamily. Homotetramer. Mg(2+) serves as cofactor.

The protein resides in the cell inner membrane. The catalysed reaction is GMP + diphosphate = guanine + 5-phospho-alpha-D-ribose 1-diphosphate. It carries out the reaction XMP + diphosphate = xanthine + 5-phospho-alpha-D-ribose 1-diphosphate. The enzyme catalyses IMP + diphosphate = hypoxanthine + 5-phospho-alpha-D-ribose 1-diphosphate. The protein operates within purine metabolism; GMP biosynthesis via salvage pathway; GMP from guanine: step 1/1. It functions in the pathway purine metabolism; XMP biosynthesis via salvage pathway; XMP from xanthine: step 1/1. Its function is as follows. Purine salvage pathway enzyme that catalyzes the transfer of the ribosyl-5-phosphate group from 5-phospho-alpha-D-ribose 1-diphosphate (PRPP) to the N9 position of the 6-oxopurines guanine and xanthine to form the corresponding ribonucleotides GMP (guanosine 5'-monophosphate) and XMP (xanthosine 5'-monophosphate), with the release of PPi. To a lesser extent, also acts on hypoxanthine. The sequence is that of Xanthine-guanine phosphoribosyltransferase from Escherichia coli (strain UTI89 / UPEC).